Consider the following 731-residue polypeptide: 1,4-alpha-glucan branching enzyme GlgB (731 aa).

The Nucleophile role is filled by Asp412. The Proton donor role is filled by Glu465.

This sequence belongs to the glycosyl hydrolase 13 family. GlgB subfamily. As to quaternary structure, monomer.

It carries out the reaction Transfers a segment of a (1-&gt;4)-alpha-D-glucan chain to a primary hydroxy group in a similar glucan chain.. The protein operates within glycan biosynthesis; glycogen biosynthesis. In terms of biological role, catalyzes the formation of the alpha-1,6-glucosidic linkages in glycogen by scission of a 1,4-alpha-linked oligosaccharide from growing alpha-1,4-glucan chains and the subsequent attachment of the oligosaccharide to the alpha-1,6 position. The polypeptide is 1,4-alpha-glucan branching enzyme GlgB (Bordetella bronchiseptica (strain ATCC BAA-588 / NCTC 13252 / RB50) (Alcaligenes bronchisepticus)).